The sequence spans 529 residues: Zinc metalloproteinase MspA (529 aa).

Positions 1-24 are cleaved as a signal peptide; it reads MHHNYYLSPLAVALALGMVSPAKA. The propeptide occupies 25 to 204; the sequence is ADPILLQNAS…PFVQWNDIKT (180 aa). Histidine 365 is a Zn(2+) binding site. The active site involves glutamate 366. Residues histidine 369 and glutamate 389 each coordinate Zn(2+). Histidine 451 functions as the Proton donor in the catalytic mechanism.

The protein belongs to the peptidase M4 family. Zn(2+) is required as a cofactor.

The protein is Zinc metalloproteinase MspA (mspA) of Legionella longbeachae.